The sequence spans 145 residues: Lysozyme-like protein 4 (145 aa).

Positions 1 to 19 are cleaved as a signal peptide; sequence MQLYLVLLLISYLLTPIGA. The region spanning 20-145 is the C-type lysozyme domain; the sequence is SILGRCTVAK…LDRWLDGCDL (126 aa). Intrachain disulfides connect Cys-25-Cys-143, Cys-49-Cys-130, Cys-84-Cys-95, and Cys-91-Cys-109. Residue Glu-54 is part of the active site.

It belongs to the glycosyl hydrolase 22 family. As to quaternary structure, monomer. In terms of tissue distribution, expressed strongly in testis and in epididymis, and weakly in brain and lung. Detected in sperm (at protein level).

The protein localises to the secreted. The protein resides in the cytoplasmic vesicle. Its subcellular location is the secretory vesicle. It is found in the acrosome. It localises to the cell projection. The protein localises to the cilium. The protein resides in the flagellum. Its function is as follows. May be involved in fertilization. Has no detectable bacteriolytic in vitro. Has no lysozyme activity in vitro. This is Lysozyme-like protein 4 (Lyzl4) from Mus musculus (Mouse).